A 119-amino-acid polypeptide reads, in one-letter code: Large ribosomal subunit protein bL19 (119 aa).

This sequence belongs to the bacterial ribosomal protein bL19 family.

This protein is located at the 30S-50S ribosomal subunit interface and may play a role in the structure and function of the aminoacyl-tRNA binding site. The protein is Large ribosomal subunit protein bL19 of Pseudoalteromonas translucida (strain TAC 125).